The chain runs to 150 residues: Nitric oxide reductase subunit C (150 aa).

A helical; Signal-anchor membrane pass occupies residues 13–29 (IFYGGSLFFFLLFAALT). 3 residues coordinate heme c: C62, C65, and H66.

In terms of assembly, heterodimer of cytochromes b (large subunit) and c (small subunit).

Its subcellular location is the cell membrane. In terms of biological role, component of the anaerobic respiratory chain that transforms nitrate to dinitrogen (denitrification). This is Nitric oxide reductase subunit C (norC) from Halomonas halodenitrificans (Paracoccus halodenitrificans).